Consider the following 203-residue polypeptide: MPYIPMPYVVEQTHRGERSYDIYSRLLKDRIIFLGTPVDDDVANVIIAQLLFLESEDPDKDINLYINSPGGSVTSGLAIYDTMQYVKPQVSTICLGQAASMGAFLLAGGAAGKRFAVPNARIMIHQLSGGFQGQATDIEIQAKEALRLKAKLNEIMARHTRQPIERIERDTERDYFMSAGEAKEYGLIDDVFLHKKAADKKPQ.

The Nucleophile role is filled by serine 100. Residue histidine 125 is part of the active site.

The protein belongs to the peptidase S14 family. In terms of assembly, fourteen ClpP subunits assemble into 2 heptameric rings which stack back to back to give a disk-like structure with a central cavity, resembling the structure of eukaryotic proteasomes.

Its subcellular location is the cytoplasm. It catalyses the reaction Hydrolysis of proteins to small peptides in the presence of ATP and magnesium. alpha-casein is the usual test substrate. In the absence of ATP, only oligopeptides shorter than five residues are hydrolyzed (such as succinyl-Leu-Tyr-|-NHMec, and Leu-Tyr-Leu-|-Tyr-Trp, in which cleavage of the -Tyr-|-Leu- and -Tyr-|-Trp bonds also occurs).. Its function is as follows. Cleaves peptides in various proteins in a process that requires ATP hydrolysis. Has a chymotrypsin-like activity. Plays a major role in the degradation of misfolded proteins. The polypeptide is ATP-dependent Clp protease proteolytic subunit (Anaeromyxobacter dehalogenans (strain 2CP-1 / ATCC BAA-258)).